The chain runs to 877 residues: AP-5 complex subunit beta-1 (877 aa).

In terms of assembly, probably part of the adaptor protein complex 5 (AP-5), a tetramer composed of AP5B1, AP5M1, AP5S1 and AP5Z1. Interacts with ZFYVE26 and SPG11.

Functionally, as part of AP-5, a probable fifth adaptor protein complex, it may be involved in endosomal transport. This chain is AP-5 complex subunit beta-1 (AP5B1), found in Bos taurus (Bovine).